The primary structure comprises 406 residues: Tryptophan 2,3-dioxygenase (406 aa).

Residues 72-76 (FIITH) and R144 contribute to the substrate site. Residue H328 participates in heme binding. A substrate-binding site is contributed by T342.

Belongs to the tryptophan 2,3-dioxygenase family. Homotetramer. Dimer of dimers. It depends on heme as a cofactor.

It catalyses the reaction L-tryptophan + O2 = N-formyl-L-kynurenine. The protein operates within amino-acid degradation; L-tryptophan degradation via kynurenine pathway; L-kynurenine from L-tryptophan: step 1/2. Heme-dependent dioxygenase that catalyzes the oxidative cleavage of the L-tryptophan (L-Trp) pyrrole ring and converts L-tryptophan to N-formyl-L-kynurenine. Catalyzes the oxidative cleavage of the indole moiety. The sequence is that of Tryptophan 2,3-dioxygenase from Homo sapiens (Human).